Consider the following 487-residue polypeptide: Sodium-coupled neutral amino acid symporter 1 (487 aa).

Residues 1-74 (MMHFKSGLEL…EYIPGTTSLG (74 aa)) are Cytoplasmic-facing. At Ser6 the chain carries Phosphoserine. Thr11 carries the post-translational modification Phosphothreonine. Residues Ser25, Ser28, Ser49, and Ser52 each carry the phosphoserine modification. Thr54 bears the Phosphothreonine mark. Ser56 carries the post-translational modification Phosphoserine. The chain crosses the membrane as a helical span at residues 75-97 (MSVFNLSNAIMGSGILGLAFALA). At 98–112 (NTGILLFLVLLTSVT) the chain is on the extracellular side. Residues 113 to 133 (LLSIYSINLLLICSKETGCMV) traverse the membrane as a helical segment. The Cytoplasmic segment spans residues 134–147 (YEKLGEQVFGTTGK). A helical membrane pass occupies residues 148–168 (FVIFGATSLQNTGAMLSYLFI). The Extracellular portion of the chain corresponds to 169 to 188 (VKNELPSAIKFLMGKEETFS). The helical transmembrane segment at 189–211 (AWYVDGRVLVVIVTFGIILPLCL) threads the bilayer. Topologically, residues 212–216 (LKNLG) are cytoplasmic. A helical transmembrane segment spans residues 217–237 (YLGYTSGFSLSCMVFFLIVVI). The Extracellular segment spans residues 238 to 275 (YKKFQIPCIVPELNSTISANSTNADTCTPKYVTLNSKT). An intrachain disulfide couples Cys245 to Cys264. N-linked (GlcNAc...) asparagine glycans are attached at residues Asn251 and Asn257. The chain crosses the membrane as a helical span at residues 276-296 (VYALPTIAFAFVCHPSVLPIY). The Cytoplasmic segment spans residues 297 to 312 (SELKDRSQKKMQMVSN). A helical membrane pass occupies residues 313–333 (ISFFAMFVMYFLTAIFGYLTF). Residues 334–350 (YDNVQSDLLHKYQGKDD) lie on the Extracellular side of the membrane. Residues 351–371 (ILILTVRLAVIVAVILTVPVL) traverse the membrane as a helical segment. At 372-393 (FFTVRSSLFELAKKTKFNLCRH) the chain is on the cytoplasmic side. Residues 394–414 (TVVTCILLVVINLLVISIPSM) form a helical membrane-spanning segment. The Extracellular portion of the chain corresponds to 415–416 (KD). Residues 417–437 (IFGVVGVTSANMLIFILPSSL) traverse the membrane as a helical segment. The Cytoplasmic portion of the chain corresponds to 438-452 (YLKITDQDGDKGTQR). The helical transmembrane segment at 453–473 (IWAALFLGLGVLFSLVSIPLV) threads the bilayer. Topologically, residues 474–487 (IYDWACSSSSDEGH) are extracellular.

It belongs to the amino acid/polyamine transporter 2 family. In terms of processing, N-glycosylation plays an important role in the L-glutamine transport.

It localises to the cell membrane. It carries out the reaction L-glutamine(in) + Na(+)(in) = L-glutamine(out) + Na(+)(out). The enzyme catalyses L-alanine(in) + Na(+)(in) = L-alanine(out) + Na(+)(out). It catalyses the reaction L-asparagine(in) + Na(+)(in) = L-asparagine(out) + Na(+)(out). The catalysed reaction is L-histidine(in) + Na(+)(in) = L-histidine(out) + Na(+)(out). It carries out the reaction L-serine(in) + Na(+)(in) = L-serine(out) + Na(+)(out). The enzyme catalyses L-cysteine(in) + Na(+)(in) = L-cysteine(out) + Na(+)(out). It catalyses the reaction L-methionine(in) + Na(+)(in) = L-methionine(out) + Na(+)(out). The catalysed reaction is glycine(in) + Na(+)(in) = glycine(out) + Na(+)(out). It carries out the reaction L-threonine(in) + Na(+)(in) = L-threonine(out) + Na(+)(out). The enzyme catalyses L-proline(in) + Na(+)(in) = L-proline(out) + Na(+)(out). With respect to regulation, inhibited by alpha-(methylamino)isobutyric acid (MeAIB). Inhibited by lithium, potassium, choline ions, N-methylglucamine. The pH dependence has an allosteric effect on the transport. Functionally, symporter that cotransports short-chain neutral amino acids and sodium ions from the extraccellular to the intracellular side of the cell membrane. The transport is elctrogenic, pH dependent and driven by the Na(+) electrochemical gradient. Participates in the astroglia-derived glutamine transport into GABAergic interneurons for neurotransmitter GABA de novo synthesis. May also contributes to amino acid transport in placental trophoblast. Regulates synaptic plasticity. The chain is Sodium-coupled neutral amino acid symporter 1 from Pongo abelii (Sumatran orangutan).